The following is a 112-amino-acid chain: Ribonuclease P protein component (112 aa).

The protein belongs to the RnpA family. Consists of a catalytic RNA component (M1 or rnpB) and a protein subunit.

It catalyses the reaction Endonucleolytic cleavage of RNA, removing 5'-extranucleotides from tRNA precursor.. RNaseP catalyzes the removal of the 5'-leader sequence from pre-tRNA to produce the mature 5'-terminus. It can also cleave other RNA substrates such as 4.5S RNA. The protein component plays an auxiliary but essential role in vivo by binding to the 5'-leader sequence and broadening the substrate specificity of the ribozyme. This is Ribonuclease P protein component from Pelotomaculum thermopropionicum (strain DSM 13744 / JCM 10971 / SI).